The chain runs to 1051 residues: Ubiquitin-activating enzyme E1 1 (1051 aa).

A run of 2 repeats spans residues 56–194 and 453–605. The interval 56–605 is 2 approximate repeats; it reads GRETMKRLFG…GAKCNTQMVI (550 aa). ATP-binding positions include alanine 472, aspartate 498, arginine 509, lysine 522, and 570-571; that span reads DN. The active-site Glycyl thioester intermediate is the cysteine 626.

This sequence belongs to the ubiquitin-activating E1 family. Monomer. The N-terminus is blocked.

The catalysed reaction is ATP + ubiquitin + [E1 ubiquitin-activating enzyme]-L-cysteine = AMP + diphosphate + S-ubiquitinyl-[E1 ubiquitin-activating enzyme]-L-cysteine.. It participates in protein modification; protein ubiquitination. Activates ubiquitin by first adenylating its C-terminal glycine residue with ATP, and thereafter linking this residue to the side chain of a cysteine residue in E1, yielding a ubiquitin-E1 thioester and free AMP. This is Ubiquitin-activating enzyme E1 1 from Triticum aestivum (Wheat).